Consider the following 293-residue polypeptide: MAIVSAEKFVQAARDNGYAVGGFNTNNLEWTQAILRAAEAKKAPVLIQTSMGAAKYMGGYKVARNLIANLVESMGITVPVAIHLDHGHYEDALECIEVGYTSIMFDGSHLPVEENLKLAKEVVEKAHAKGISVEAEVGTIGGEEDGIIGKGELAPIEDAKAMVETGIDFLAAGIGNIHGPYPVNWEGLDLDHLQKLTEALPGFPIVLHGGSGIPDEQIQAAIKLGVAKVNVNTECQIAFANATRKFARDYEANEAEYDKKKLFDPRKFLADGVKAIQASVEERIDVFGSEGKA.

Ser50 is a D-glyceraldehyde 3-phosphate binding site. Asp85 (proton donor) is an active-site residue. Zn(2+) is bound by residues His86, Asp106, Glu136, and His178. Gly179 contributes to the dihydroxyacetone phosphate binding site. His208 provides a ligand contact to Zn(2+). Dihydroxyacetone phosphate-binding positions include 209 to 211 (GGS) and 230 to 233 (NVNT).

This sequence belongs to the class II fructose-bisphosphate aldolase family. Zn(2+) serves as cofactor.

The enzyme catalyses beta-D-fructose 1,6-bisphosphate = D-glyceraldehyde 3-phosphate + dihydroxyacetone phosphate. It participates in carbohydrate degradation; glycolysis; D-glyceraldehyde 3-phosphate and glycerone phosphate from D-glucose: step 4/4. Functionally, catalyzes the aldol condensation of dihydroxyacetone phosphate (DHAP or glycerone-phosphate) with glyceraldehyde 3-phosphate (G3P) to form fructose 1,6-bisphosphate (FBP) in gluconeogenesis and the reverse reaction in glycolysis. This is Fructose-bisphosphate aldolase (fba) from Streptococcus pneumoniae serotype 4 (strain ATCC BAA-334 / TIGR4).